We begin with the raw amino-acid sequence, 357 residues long: uncharacterized protein (357 aa).

The region spanning 27–196 is the PNPLA domain; it reads LVCEGGGQRG…SDAIPVKEAA (170 aa). A GXGXXG motif is present at residues 31–36; it reads GGGQRG. The GXSXG motif lies at 59–63; the sequence is GTSAG. Ser61 serves as the catalytic Nucleophile. The active-site Proton acceptor is the Asp183. The short motif at 183–185 is the DGA/G element; sequence DGG.

In terms of biological role, probable lipid hydrolase. This is an uncharacterized protein from Escherichia coli (strain K12).